Here is a 411-residue protein sequence, read N- to C-terminus: Dual-specificity RNA methyltransferase RlmN (411 aa).

Glu-125 serves as the catalytic Proton acceptor. The Radical SAM core domain maps to 131 to 380 (EEGRGTLCIS…IRTPRGRDIL (250 aa)). A disulfide bridge connects residues Cys-138 and Cys-383. Positions 145, 149, and 152 each coordinate [4Fe-4S] cluster. Residues 209–210 (GE), Ser-241, 263–265 (SLH), and Asn-340 contribute to the S-adenosyl-L-methionine site. Cys-383 serves as the catalytic S-methylcysteine intermediate.

This sequence belongs to the radical SAM superfamily. RlmN family. [4Fe-4S] cluster serves as cofactor.

It is found in the cytoplasm. It carries out the reaction adenosine(2503) in 23S rRNA + 2 reduced [2Fe-2S]-[ferredoxin] + 2 S-adenosyl-L-methionine = 2-methyladenosine(2503) in 23S rRNA + 5'-deoxyadenosine + L-methionine + 2 oxidized [2Fe-2S]-[ferredoxin] + S-adenosyl-L-homocysteine. The catalysed reaction is adenosine(37) in tRNA + 2 reduced [2Fe-2S]-[ferredoxin] + 2 S-adenosyl-L-methionine = 2-methyladenosine(37) in tRNA + 5'-deoxyadenosine + L-methionine + 2 oxidized [2Fe-2S]-[ferredoxin] + S-adenosyl-L-homocysteine. Functionally, specifically methylates position 2 of adenine 2503 in 23S rRNA and position 2 of adenine 37 in tRNAs. m2A2503 modification seems to play a crucial role in the proofreading step occurring at the peptidyl transferase center and thus would serve to optimize ribosomal fidelity. This Brucella melitensis biotype 2 (strain ATCC 23457) protein is Dual-specificity RNA methyltransferase RlmN.